We begin with the raw amino-acid sequence, 75 residues long: Guanine nucleotide-binding protein G(I)/G(S)/G(O) subunit gamma-4 (75 aa).

A Cysteine methyl ester modification is found at Cys-72. Cys-72 carries the S-geranylgeranyl cysteine lipid modification. The propeptide at 73 to 75 is removed in mature form; sequence TIL.

This sequence belongs to the G protein gamma family. As to quaternary structure, g proteins are composed of 3 units, alpha, beta and gamma. Interacts with beta-1 and beta-2, but not with beta-3. Interacts with KCNK1. Interacts (via C-terminus) with KCNK2/TREK-1 (via N-terminus); this interaction confers ion selectivity to Cl(-) and L-glutamate. In terms of tissue distribution, brain.

It is found in the cell membrane. Functionally, guanine nucleotide-binding proteins (G proteins) are involved as a modulator or transducer in various transmembrane signaling systems. The beta and gamma chains are required for the GTPase activity, for replacement of GDP by GTP, and for G protein-effector interaction. In Mus musculus (Mouse), this protein is Guanine nucleotide-binding protein G(I)/G(S)/G(O) subunit gamma-4 (Gng4).